The sequence spans 199 residues: Translation initiation factor IF-3 (199 aa).

It belongs to the IF-3 family. As to quaternary structure, monomer.

It localises to the cytoplasm. Functionally, IF-3 binds to the 30S ribosomal subunit and shifts the equilibrium between 70S ribosomes and their 50S and 30S subunits in favor of the free subunits, thus enhancing the availability of 30S subunits on which protein synthesis initiation begins. This is Translation initiation factor IF-3 from Gloeobacter violaceus (strain ATCC 29082 / PCC 7421).